Here is a 212-residue protein sequence, read N- to C-terminus: 2-phospho-L-lactate guanylyltransferase (212 aa).

Belongs to the CofC family. As to quaternary structure, homodimer.

It catalyses the reaction (2S)-2-phospholactate + GTP + H(+) = (2S)-lactyl-2-diphospho-5'-guanosine + diphosphate. It participates in cofactor biosynthesis; coenzyme F420 biosynthesis. Guanylyltransferase that catalyzes the activation of (2S)-2-phospholactate (2-PL) as (2S)-lactyl-2-diphospho-5'-guanosine, via the condensation of 2-PL with GTP. It is involved in the biosynthesis of coenzyme F420, a hydride carrier cofactor. The sequence is that of 2-phospho-L-lactate guanylyltransferase from Methanocorpusculum labreanum (strain ATCC 43576 / DSM 4855 / Z).